The sequence spans 277 residues: Adenylate kinase (277 aa).

53–58 (GAGKGT) lines the ATP pocket. The interval 73–102 (ATGDMLRAQVAAKTPLGREAKKIMDAGGLV) is NMP. Residues Thr74, Arg79, 100–102 (GLV), 129–132 (GFPR), and Gln136 each bind AMP. The segment at 170–207 (GRLVHPASGRSYHKIFNPPKAPMTDDATGEPLIQRSDD) is LID. ATP-binding positions include Arg171 and 180 to 181 (SY). AMP is bound by residues Arg204 and Arg215. Gln243 is a binding site for ATP.

This sequence belongs to the adenylate kinase family. AK2 subfamily. Monomer.

The protein resides in the cytoplasm. Its subcellular location is the cytosol. It localises to the mitochondrion intermembrane space. The enzyme catalyses AMP + ATP = 2 ADP. Functionally, catalyzes the reversible transfer of the terminal phosphate group between ATP and AMP. Plays an important role in cellular energy homeostasis and in adenine nucleotide metabolism. Adenylate kinase activity is critical for regulation of the phosphate utilization and the AMP de novo biosynthesis pathways. The sequence is that of Adenylate kinase from Phaeosphaeria nodorum (strain SN15 / ATCC MYA-4574 / FGSC 10173) (Glume blotch fungus).